The primary structure comprises 612 residues: Apoptosis-inducing factor 1, mitochondrial (612 aa).

Short sequence motifs (mitochondrial localization signal) lie at residues 1–30 and 62–88; these read MFRCGGLAGAFKQKLVPLVRTVYVQRPKQR and KMDNSVLVLIVGLSTIGAGAYAYKTIK. A mitochondrion-targeting transit peptide spans 1 to 54; it reads MFRCGGLAGAFKQKLVPLVRTVYVQRPKQRNRLPGNLFQQWRVPLELQMARQMA. Positions 55–101 are cleaved as a propeptide — removed in mature form; the sequence is SSGSSGGKMDNSVLVLIVGLSTIGAGAYAYKTIKEDQKRYNERVMGL. Position 108 is an N6-succinyllysine (Lys108). Residue Ser115 is modified to Phosphoserine. The tract at residues 133–482 is FAD-dependent oxidoreductase; the sequence is FLLIGGGTAA…KPYWHQSMFW (350 aa). Residues 137–141, 163–164, Arg171, and Lys176 each bind FAD; these read GGGTA and ED. Trp195 contacts NAD(+). Val232 lines the FAD pocket. Residue Lys254 forms a Glycyl lysine isopeptide (Lys-Gly) (interchain with G-Cter in ubiquitin) linkage. Ser267 bears the Phosphoserine mark. Arg284 serves as a coordination point for FAD. NAD(+) is bound by residues 307–310, Glu335, and Lys341; that span reads GGFL. Ser370 carries the phosphoserine modification. An N6-acetyllysine modification is found at Lys387. NAD(+) is bound at residue Gly398. Position 437 (Asp437) interacts with FAD. The Nuclear localization signal motif lies at 445 to 450; the sequence is KLGRRR. NAD(+)-binding positions include 452 to 453, Trp482, and Glu492; that span reads EH. FAD contacts are provided by residues 453 to 454 and Trp482; that span reads HH. Positions 512-528 are enriched in polar residues; that stretch reads AQDNPKSATEQSGTGIR. Residues 512-551 are disordered; that stretch reads AQDNPKSATEQSGTGIRSESETESEASEITIPPSAPAVPQ. Thr520 bears the Phosphothreonine mark. Ser523 and Ser529 each carry phosphoserine. Residue Asn582 participates in NAD(+) binding. Residue Lys592 is modified to N6-acetyllysine.

The protein belongs to the FAD-dependent oxidoreductase family. In terms of assembly, monomer (oxidized form). Homodimer (reduced form). Upon reduction with NADH, undergoes dimerization and forms tight, long-lived FADH2-NAD charge transfer complexes (CTC) resistant to oxidation. Also dimerizes with isoform 3 preventing its release from mitochondria. Interacts with XIAP/BIRC4. Interacts (via N-terminus) with EIF3G (via C-terminus). Interacts with PRELID1. Interacts with CHCHD4; the interaction increases in presence of NADH. Interacts with processed form of PARP1 (Poly [ADP-ribose] polymerase 1, processed C-terminus); interaction is mediated with poly-ADP-ribose chains attached to PARP1, promoting translocation into the nucleus. The cofactor is FAD. Post-translationally, under normal conditions, a 54-residue N-terminal segment is first proteolytically removed during or just after translocation into the mitochondrial intermembrane space (IMS) by the mitochondrial processing peptidase (MPP) to form the inner-membrane-anchored mature form (AIFmit). During apoptosis, it is further proteolytically processed at amino-acid position 101 leading to the generation of the mature form, which is confined to the mitochondrial IMS in a soluble form (AIFsol). AIFsol is released to the cytoplasm in response to specific death signals, and translocated to the nucleus, where it induces nuclear apoptosis in a caspase-independent manner. Ubiquitination by XIAP/BIRC4 does not lead to proteasomal degradation. Ubiquitination at Lys-254 by XIAP/BIRC4 blocks its ability to bind DNA and induce chromatin degradation, thereby inhibiting its ability to induce cell death. In terms of tissue distribution, expressed in cortical neurons (at protein level). Expressed in liver (at protein level).

Its subcellular location is the mitochondrion intermembrane space. The protein resides in the mitochondrion inner membrane. It is found in the cytoplasm. The protein localises to the nucleus. It localises to the perinuclear region. Its subcellular location is the mitochondrion. The protein resides in the cytosol. The catalysed reaction is A + NADH + H(+) = AH2 + NAD(+). Functions both as NADH oxidoreductase and as regulator of apoptosis. In response to apoptotic stimuli, it is released from the mitochondrion intermembrane space into the cytosol and to the nucleus, where it functions as a proapoptotic factor in a caspase-independent pathway. Release into the cytoplasm is mediated upon binding to poly-ADP-ribose chains. The soluble form (AIFsol) found in the nucleus induces 'parthanatos' i.e. caspase-independent fragmentation of chromosomal DNA. Binds to DNA in a sequence-independent manner. Interacts with EIF3G, and thereby inhibits the EIF3 machinery and protein synthesis, and activates caspase-7 to amplify apoptosis. Plays a critical role in caspase-independent, pyknotic cell death in hydrogen peroxide-exposed cells. In contrast, participates in normal mitochondrial metabolism. Plays an important role in the regulation of respiratory chain biogenesis by interacting with CHCHD4 and controlling CHCHD4 mitochondrial import. The sequence is that of Apoptosis-inducing factor 1, mitochondrial from Mus musculus (Mouse).